A 308-amino-acid polypeptide reads, in one-letter code: Acetyl-coenzyme A carboxylase carboxyl transferase subunit beta (308 aa).

The CoA carboxyltransferase N-terminal domain maps to 25–294; sequence VWTKCTSCEQ…PLVVSVNDAP (270 aa). Cysteine 29, cysteine 32, cysteine 48, and cysteine 51 together coordinate Zn(2+). The C4-type zinc finger occupies 29-51; that stretch reads CTSCEQVLYYAELERNLEVCPKC.

The protein belongs to the AccD/PCCB family. As to quaternary structure, acetyl-CoA carboxylase is a heterohexamer composed of biotin carboxyl carrier protein (AccB), biotin carboxylase (AccC) and two subunits each of ACCase subunit alpha (AccA) and ACCase subunit beta (AccD). The cofactor is Zn(2+).

The protein localises to the cytoplasm. The enzyme catalyses N(6)-carboxybiotinyl-L-lysyl-[protein] + acetyl-CoA = N(6)-biotinyl-L-lysyl-[protein] + malonyl-CoA. Its pathway is lipid metabolism; malonyl-CoA biosynthesis; malonyl-CoA from acetyl-CoA: step 1/1. Functionally, component of the acetyl coenzyme A carboxylase (ACC) complex. Biotin carboxylase (BC) catalyzes the carboxylation of biotin on its carrier protein (BCCP) and then the CO(2) group is transferred by the transcarboxylase to acetyl-CoA to form malonyl-CoA. The protein is Acetyl-coenzyme A carboxylase carboxyl transferase subunit beta of Vibrio cholerae serotype O1 (strain ATCC 39315 / El Tor Inaba N16961).